The following is a 272-amino-acid chain: Sulfate transporter CysZ (272 aa).

A run of 4 helical transmembrane segments spans residues 29-49, 66-86, 148-168, and 219-239; these read FVIIPILLNTILLCGLFWLFI, WLSFLSVILLTLSILTILLLF, IIALFLLSFIPLVGQTIVPVL, and FVPVINLLIMPVAVCGATLMW.

The protein belongs to the CysZ family.

The protein resides in the cell inner membrane. In terms of biological role, high affinity, high specificity proton-dependent sulfate transporter, which mediates sulfate uptake. Provides the sulfur source for the cysteine synthesis pathway. The sequence is that of Sulfate transporter CysZ from Haemophilus influenzae (strain 86-028NP).